The sequence spans 205 residues: High frequency lysogenization protein HflD homolog (205 aa).

The protein belongs to the HflD family.

The protein localises to the cytoplasm. The protein resides in the cell inner membrane. This Alkalilimnicola ehrlichii (strain ATCC BAA-1101 / DSM 17681 / MLHE-1) protein is High frequency lysogenization protein HflD homolog.